The following is a 309-amino-acid chain: MNEFYQKDIISIKDFSKDQLEQIFQSTDKIISLDPIDRREICKGKTLGYLFYEPSTRTRLSFEAAMASIGGNSLGISDITSSSTQKGESLADTVRIISIYSDAMVLRHPLDGSSRFAAEVSDKPVINAGSGTEEHPTQAIQDLYTIKKEKKKIDRLKIGIVGDLKYGRTVYSLLHGLGNYDVDVRLISPESLRIRSDSTYEIKQKLDYTESTNIEDHIDELDVLYVTRIQKERFPDEEEYLKVKGSYVVGLDLLKQMKDDSIILHPLPRIDEISTDVDKTKNAKYFEQAEYGKYTRAALLGLTLNENGF.

Positions 57 and 58 each coordinate carbamoyl phosphate. Lys-86 is a binding site for L-aspartate. Carbamoyl phosphate contacts are provided by Arg-107, His-135, and Gln-138. L-aspartate-binding residues include Arg-168 and Arg-228. Leu-267 and Pro-268 together coordinate carbamoyl phosphate.

Belongs to the aspartate/ornithine carbamoyltransferase superfamily. ATCase family. As to quaternary structure, heterooligomer of catalytic and regulatory chains.

It catalyses the reaction carbamoyl phosphate + L-aspartate = N-carbamoyl-L-aspartate + phosphate + H(+). It participates in pyrimidine metabolism; UMP biosynthesis via de novo pathway; (S)-dihydroorotate from bicarbonate: step 2/3. In terms of biological role, catalyzes the condensation of carbamoyl phosphate and aspartate to form carbamoyl aspartate and inorganic phosphate, the committed step in the de novo pyrimidine nucleotide biosynthesis pathway. This chain is Aspartate carbamoyltransferase catalytic subunit, found in Nitrosopumilus maritimus (strain SCM1).